Consider the following 801-residue polypeptide: Protein 4.1 (801 aa).

The disordered stretch occupies residues 1 to 187 (MTTEKGLLAE…GESKASHKVV (187 aa)). Residues 45 to 58 (EQSQESPSTTSPST) are compositionally biased toward low complexity. Positions 88-107 (SDEKEVELLGEKGQDQKDVD) are enriched in basic and acidic residues. Positions 108-117 (EGLGEQLEDD) are enriched in acidic residues. A compositionally biased stretch (polar residues) spans 141–151 (SLSSAETQPAQ). Acidic residues predominate over residues 154 to 166 (QKEDQDPEADCED). The span at 167-182 (VEGKEPIKKPEGESKA) shows a compositional bias: basic and acidic residues. The 282-residue stretch at 193–474 (MRCKVTLLDD…EHHTFFRLTS (282 aa)) folds into the FERM domain. The interval 477-587 (SIPKHRFLSL…GMPNQRESPK (111 aa)) is hydrophilic. The segment at 516-613 (RTGSKRASRS…DKVKDLEKTQ (98 aa)) is disordered. Residues 563 to 577 (RVEEMPKKTEEKPKE) show a composition bias toward basic and acidic residues. The segment at 588-651 (DVKATQQDSP…WDKRLSTHSP (64 aa)) is spectrin--actin-binding. Positions 591–601 (ATQQDSPSPTV) are enriched in polar residues. The span at 604 to 613 (DKVKDLEKTQ) shows a compositional bias: basic and acidic residues. The tract at residues 653–801 (RTLSFNGQVQ…GVVHQETEIA (149 aa)) is C-terminal (CTD).

As to quaternary structure, binds with a high affinity to glycophorin and with lower affinity to band III protein. Associates with the nuclear mitotic apparatus. Binds calmodulin. Phosphorylated at multiple sites by different protein kinases and each phosphorylation event selectively modulates the protein's functions. As to expression, found exclusively in photoreceptors following the terminal mitosis of retinal neurons. When retinal synaptogenesis is complete, protein 4.1 is also expressed in the inner retina. In adult amphibian retinas, protein 4.1 is detected in photoreceptors, bipolar cells, and ganglion cell axons.

Its subcellular location is the nucleus. It is found in the cytoplasm. It localises to the cytoskeleton. The protein resides in the cell cortex. Functionally, protein 4.1 is a major structural element of the erythrocyte membrane skeleton. It plays a key role in regulating membrane physical properties of mechanical stability and deformability by stabilizing spectrin-actin interaction. May be required for dynein-dynactin complex and NUMA1 recruitment at the mitotic cell cortex during anaphase. The sequence is that of Protein 4.1 from Xenopus laevis (African clawed frog).